Reading from the N-terminus, the 417-residue chain is NADH-quinone oxidoreductase subunit D (417 aa).

The protein belongs to the complex I 49 kDa subunit family. In terms of assembly, NDH-1 is composed of 14 different subunits. Subunits NuoB, C, D, E, F, and G constitute the peripheral sector of the complex.

The protein localises to the cell inner membrane. It catalyses the reaction a quinone + NADH + 5 H(+)(in) = a quinol + NAD(+) + 4 H(+)(out). Functionally, NDH-1 shuttles electrons from NADH, via FMN and iron-sulfur (Fe-S) centers, to quinones in the respiratory chain. The immediate electron acceptor for the enzyme in this species is believed to be ubiquinone. Couples the redox reaction to proton translocation (for every two electrons transferred, four hydrogen ions are translocated across the cytoplasmic membrane), and thus conserves the redox energy in a proton gradient. This is NADH-quinone oxidoreductase subunit D from Burkholderia lata (strain ATCC 17760 / DSM 23089 / LMG 22485 / NCIMB 9086 / R18194 / 383).